The chain runs to 109 residues: Parvalbumin alpha (109 aa).

Ser-1 is subject to N-acetylserine. EF-hand domains follow at residues 38–73 and 77–109; these read KSDA…FSDG and LNDK…AKMT. Ca(2+) contacts are provided by Asp-51, Asp-53, Ser-55, Tyr-57, Glu-59, Glu-62, Asp-90, Asp-92, Asp-94, Lys-96, and Glu-101.

It belongs to the parvalbumin family. As to quaternary structure, monomer.

Its function is as follows. In muscle, parvalbumin is thought to be involved in relaxation after contraction. It binds two calcium ions. The protein is Parvalbumin alpha of Raja clavata (Thornback ray).